The sequence spans 77 residues: MKSKDTLKWFPAQLPEVRIILGDAVVEVAKQGRPINTRTLLDYIEGNIKKKSWLDNKELLQTAISVLKDNQNLNGKM.

It to E.coli YnaE.

This is Cold shock protein YdfK (ydfK) from Escherichia coli (strain K12).